Reading from the N-terminus, the 231-residue chain is Large ribosomal subunit protein uL1 (231 aa).

Belongs to the universal ribosomal protein uL1 family. Part of the 50S ribosomal subunit.

In terms of biological role, binds directly to 23S rRNA. The L1 stalk is quite mobile in the ribosome, and is involved in E site tRNA release. Functionally, protein L1 is also a translational repressor protein, it controls the translation of the L11 operon by binding to its mRNA. This chain is Large ribosomal subunit protein uL1, found in Staphylococcus epidermidis (strain ATCC 35984 / DSM 28319 / BCRC 17069 / CCUG 31568 / BM 3577 / RP62A).